The chain runs to 79 residues: Protein FAM236C (79 aa).

A disordered region spans residues 19 to 48 (KGPQKDPEELVAVSDTAEDPSSGTGLPREP).

Belongs to the FAM236 family.

The polypeptide is Protein FAM236C (Homo sapiens (Human)).